Here is a 471-residue protein sequence, read N- to C-terminus: Ribulose bisphosphate carboxylase large chain (471 aa).

An N6,N6,N6-trimethyllysine modification is found at lysine 5. Substrate contacts are provided by asparagine 114 and threonine 164. Lysine 166 (proton acceptor) is an active-site residue. Position 168 (lysine 168) interacts with substrate. Mg(2+) is bound by residues lysine 192, aspartate 194, and glutamate 195. Position 192 is an N6-carboxylysine (lysine 192). Catalysis depends on histidine 285, which acts as the Proton acceptor. Substrate-binding residues include arginine 286, histidine 318, and serine 370.

This sequence belongs to the RuBisCO large chain family. Type I subfamily. As to quaternary structure, heterohexadecamer of 8 large chains and 8 small chains; disulfide-linked. The disulfide link is formed within the large subunit homodimers. Mg(2+) serves as cofactor. The disulfide bond which can form in the large chain dimeric partners within the hexadecamer appears to be associated with oxidative stress and protein turnover.

It localises to the plastid. It is found in the chloroplast. It catalyses the reaction 2 (2R)-3-phosphoglycerate + 2 H(+) = D-ribulose 1,5-bisphosphate + CO2 + H2O. The enzyme catalyses D-ribulose 1,5-bisphosphate + O2 = 2-phosphoglycolate + (2R)-3-phosphoglycerate + 2 H(+). RuBisCO catalyzes two reactions: the carboxylation of D-ribulose 1,5-bisphosphate, the primary event in carbon dioxide fixation, as well as the oxidative fragmentation of the pentose substrate in the photorespiration process. Both reactions occur simultaneously and in competition at the same active site. The chain is Ribulose bisphosphate carboxylase large chain from Anthocleista grandiflora (Forest fever tree).